The chain runs to 392 residues: Heat-inducible transcription repressor HrcA (392 aa).

This sequence belongs to the HrcA family.

In terms of biological role, negative regulator of class I heat shock genes (grpE-dnaK-dnaJ and groELS operons). Prevents heat-shock induction of these operons. The protein is Heat-inducible transcription repressor HrcA of Chlamydia muridarum (strain MoPn / Nigg).